Consider the following 521-residue polypeptide: Cysteine protease atg-4.2 (521 aa).

The span at 90-100 (MMGSIRPSSSS) shows a compositional bias: low complexity. A disordered region spans residues 90–109 (MMGSIRPSSSSQDVHSTGEI). Residue C203 is the Nucleophile of the active site. Catalysis depends on residues D394 and H396. A disordered region spans residues 499 to 521 (PSYEREVSETEQAQADKHGFEML).

The protein belongs to the peptidase C54 family.

The protein localises to the cytoplasm. It catalyses the reaction [protein]-C-terminal L-amino acid-glycyl-phosphatidylethanolamide + H2O = [protein]-C-terminal L-amino acid-glycine + a 1,2-diacyl-sn-glycero-3-phosphoethanolamine. In terms of biological role, cysteine protease required for autophagy. Cleaves the C-terminal amino acid of ATG8 family proteins lgg-1, to reveal a C-terminal glycine. Exposure of the glycine at the C-terminus is essential for ATG8 proteins conjugation to phosphatidylethanolamine (PE) and insertion to membranes, which is necessary for autophagy. Its cleavage activity is functionally redundant to atg-4.1, but it cleaves lgg-1 precursors less efficiently than atg-4.1. In contrast to atg-4.1, plays a more significant role in the later phases of autophagy and in addition has a role in autophagosome maturation. Acts redundantly with atg-4.1 to promote the lgg-1 delipidation to release the protein from membranes, which facilitates multiple events during macroautophagy. Regulates the accumulation of autophagic structures in neurons and is specifically, required for the maturation and elimination of autophagosomes from the synaptic region of AIY interneurons. In Caenorhabditis elegans, this protein is Cysteine protease atg-4.2.